The chain runs to 257 residues: Ribosome-inactivating protein charybdin (257 aa).

E167 is an active-site residue. A disulfide bond links C217 and C254.

The protein belongs to the ribosome-inactivating protein family. Type 1 RIP subfamily.

The catalysed reaction is Endohydrolysis of the N-glycosidic bond at one specific adenosine on the 28S rRNA.. In terms of biological role, inhibits translation in rabbit reticulocytes. The protein is Ribosome-inactivating protein charybdin of Drimia maritima (Sea squill).